The chain runs to 320 residues: uncharacterized protein (320 aa).

7 helical membrane-spanning segments follow: residues Phe24 to Ile44, Phe65 to Leu85, Thr105 to Val125, Ser132 to Leu152, Ile179 to Phe199, Met226 to Tyr246, and Thr253 to Leu275.

The protein localises to the membrane. This is an uncharacterized protein from Caenorhabditis elegans.